The following is a 207-amino-acid chain: D-aminoacyl-tRNA deacylase 1 (207 aa).

The Gly-cisPro motif, important for rejection of L-amino acids signature appears at 139–140 (GP). The segment at 142 to 207 (TIQLESPPAP…EGDVSSEREP (66 aa)) is disordered. Basic and acidic residues-rich tracts occupy residues 156-167 (LLSKQEKQQQRK) and 178-189 (SSREKAAQRSKV).

The protein belongs to the DTD family. As to quaternary structure, homodimer.

The protein resides in the cytoplasm. The enzyme catalyses a D-aminoacyl-tRNA + H2O = a tRNA + a D-alpha-amino acid + H(+). It catalyses the reaction glycyl-tRNA(Ala) + H2O = tRNA(Ala) + glycine + H(+). In terms of biological role, D-aminoacyl-tRNA deacylase, with no observable activity on tRNAs charged with their cognate L-amino acid. Hydrolyzes correctly charged, achiral, glycyl-tRNA(Gly). Deacylates mischarged D.melanogaster and E.coli glycyl-tRNA(Ala), protecting cells against glycine mischarging by AlaRS. Acts via tRNA-based rather than protein-based catalysis; rejects L-amino acids rather than detecting D-amino acids in the active site. By recycling D-aminoacyl-tRNA to D-amino acids and free tRNA molecules, this enzyme counteracts the toxicity associated with the formation of D-aminoacyl-tRNA entities in vivo and helps enforce protein L-homochirality. This chain is D-aminoacyl-tRNA deacylase 1, found in Danio rerio (Zebrafish).